The primary structure comprises 84 residues: Large ribosomal subunit protein bL27 (84 aa).

The interval 1–22 (MAHKKAGGSTRNGRDSESKRLG) is disordered.

Belongs to the bacterial ribosomal protein bL27 family.

In Shewanella denitrificans (strain OS217 / ATCC BAA-1090 / DSM 15013), this protein is Large ribosomal subunit protein bL27.